We begin with the raw amino-acid sequence, 501 residues long: G protein-activated inward rectifier potassium channel 1 (501 aa).

Residues 1 to 40 (MSALRRKFGDDYQVVTTSSSGSGLQPQGPGQDPQQQLVPK) form a disordered region. Residues 1 to 80 (MSALRRKFGD…LFTTLVDLKW (80 aa)) lie on the Cytoplasmic side of the membrane. Residues 18–38 (SSSGSGLQPQGPGQDPQQQLV) show a composition bias toward low complexity. The chain crosses the membrane as a helical span at residues 81–105 (RWNLFIFILTYTVAWLFMASMWWVI). At 106 to 129 (AYTRGDLNKAHVGNYTPCVANVYN) the chain is on the extracellular side. Residue asparagine 119 is glycosylated (N-linked (GlcNAc...) asparagine). Residues 130-141 (FPSAFLFFIETE) constitute an intramembrane region (helical; Pore-forming). Residues 142 to 148 (ATIGYGY) constitute an intramembrane region (pore-forming). The Selectivity filter signature appears at 143 to 148 (TIGYGY). The Extracellular portion of the chain corresponds to 149–157 (RYITDKCPE). A helical membrane pass occupies residues 158–179 (GIILFLFQSILGSIVDAFLIGC). Topologically, residues 180-501 (MFIKMSQPKK…LRKMNSDRFT (322 aa)) are cytoplasmic. Positions 182-209 (IKMSQPKKRAETLMFSEHAVISMRDGKL) are polyphosphoinositide (PIP2)-binding. Residues serine 385 and serine 424 each carry the phosphoserine modification.

Belongs to the inward rectifier-type potassium channel (TC 1.A.2.1) family. KCNJ3 subfamily. As to quaternary structure, associates with KCNJ5/GIRK4 or KCNJ6/GIRK2 to form a G-protein activated heteromultimer pore-forming unit. The resulting inward current is much larger. Associates with KCNJ9/GIRK3 to form a G-protein activated heteromultimer pore-forming unit.

The protein localises to the membrane. It catalyses the reaction K(+)(in) = K(+)(out). With respect to regulation, heteromultimer composed of KCNJ3/GIRK1 and KCNJ5/GIRK4 is activated by phosphatidylinositol 4,5 biphosphate (PtdIns(4,5)P2). Inward rectifier potassium channels are characterized by a greater tendency to allow potassium to flow into the cell rather than out of it. Their voltage dependence is regulated by the concentration of extracellular potassium; as external potassium is raised, the voltage range of the channel opening shifts to more positive voltages. The inward rectification is mainly due to the blockage of outward current by internal magnesium. This potassium channel is controlled by G proteins. This receptor plays a crucial role in regulating the heartbeat. The chain is G protein-activated inward rectifier potassium channel 1 (KCNJ3) from Homo sapiens (Human).